The primary structure comprises 273 residues: 4-hydroxy-tetrahydrodipicolinate reductase (273 aa).

Residues 12 to 17 (GAGGRM) and Glu38 contribute to the NAD(+) site. Arg39 is a binding site for NADP(+). NAD(+) is bound by residues 102–104 (GTT) and 126–129 (AANF). The active-site Proton donor/acceptor is the His159. His160 contributes to the (S)-2,3,4,5-tetrahydrodipicolinate binding site. The active-site Proton donor is the Lys163. 169–170 (GT) provides a ligand contact to (S)-2,3,4,5-tetrahydrodipicolinate.

Belongs to the DapB family. Homotetramer.

The protein localises to the cytoplasm. The enzyme catalyses (S)-2,3,4,5-tetrahydrodipicolinate + NAD(+) + H2O = (2S,4S)-4-hydroxy-2,3,4,5-tetrahydrodipicolinate + NADH + H(+). It carries out the reaction (S)-2,3,4,5-tetrahydrodipicolinate + NADP(+) + H2O = (2S,4S)-4-hydroxy-2,3,4,5-tetrahydrodipicolinate + NADPH + H(+). Its pathway is amino-acid biosynthesis; L-lysine biosynthesis via DAP pathway; (S)-tetrahydrodipicolinate from L-aspartate: step 4/4. In terms of biological role, catalyzes the conversion of 4-hydroxy-tetrahydrodipicolinate (HTPA) to tetrahydrodipicolinate. In Enterobacter sp. (strain 638), this protein is 4-hydroxy-tetrahydrodipicolinate reductase.